A 352-amino-acid chain; its full sequence is Photosystem II D2 protein (352 aa).

N-acetylthreonine is present on T2. The residue at position 2 (T2) is a Phosphothreonine. The helical transmembrane segment at 40 to 60 (TAYLALGGWLTGTTFVTSWYT) threads the bilayer. H117 contributes to the chlorophyll a binding site. Residues 124–140 (GFMLRQFEIARSVKLRP) form a helical membrane-spanning segment. Residues Q129 and N142 each contribute to the pheophytin a site. A helical membrane pass occupies residues 152–165 (VFVSVFLIYPLGQS). H197 contributes to the chlorophyll a binding site. A helical transmembrane segment spans residues 207 to 227 (AALLCAIHGATVENTLFEDGD). A plastoquinone-binding residues include H214 and F261. H214 serves as a coordination point for Fe cation. H268 is a binding site for Fe cation. A helical transmembrane segment spans residues 278-294 (GLWMSALGVVGLALNLR).

The protein belongs to the reaction center PufL/M/PsbA/D family. PSII is composed of 1 copy each of membrane proteins PsbA, PsbB, PsbC, PsbD, PsbE, PsbF, PsbH, PsbI, PsbJ, PsbK, PsbL, PsbM, PsbT, PsbX, PsbY, PsbZ, Psb30/Ycf12, at least 3 peripheral proteins of the oxygen-evolving complex and a large number of cofactors. It forms dimeric complexes. Requires The D1/D2 heterodimer binds P680, chlorophylls that are the primary electron donor of PSII, and subsequent electron acceptors. It shares a non-heme iron and each subunit binds pheophytin, quinone, additional chlorophylls, carotenoids and lipids. There is also a Cl(-1) ion associated with D1 and D2, which is required for oxygen evolution. The PSII complex binds additional chlorophylls, carotenoids and specific lipids. as cofactor.

The protein resides in the plastid. It is found in the chloroplast thylakoid membrane. The catalysed reaction is 2 a plastoquinone + 4 hnu + 2 H2O = 2 a plastoquinol + O2. Photosystem II (PSII) is a light-driven water:plastoquinone oxidoreductase that uses light energy to abstract electrons from H(2)O, generating O(2) and a proton gradient subsequently used for ATP formation. It consists of a core antenna complex that captures photons, and an electron transfer chain that converts photonic excitation into a charge separation. The D1/D2 (PsbA/PsbD) reaction center heterodimer binds P680, the primary electron donor of PSII as well as several subsequent electron acceptors. D2 is needed for assembly of a stable PSII complex. This is Photosystem II D2 protein from Pleurastrum terricola (Filamentous green alga).